The sequence spans 299 residues: Kruppel-like factor 2 (299 aa).

Disordered stretches follow at residues 19-38 and 146-189; these read YQNA…SHHH and YSFS…RRDK. Over residues 23–38 the composition is skewed to basic residues; the sequence is HHQHHQQHYHQQSHHH. The span at 153–180 shows a compositional bias: basic and acidic residues; sequence SGKDEEDPRIPLKDRGRVYHPQSTEKPK. 3 consecutive C2H2-type zinc fingers follow at residues 198-222, 228-252, and 258-280; these read HKCF…ERVH, YPCE…YRKH, and FACK…MKRH.

It belongs to the krueppel C2H2-type zinc-finger protein family. As to expression, expressed predominantly in intestine.

The protein resides in the nucleus. In terms of biological role, probable transcription factor which regulates lipid metabolism. The sequence is that of Kruppel-like factor 2 from Caenorhabditis elegans.